The following is a 292-amino-acid chain: Ribosomal protein L11 methyltransferase (292 aa).

S-adenosyl-L-methionine is bound by residues Thr-144, Gly-165, Asp-187, and Asn-229.

Belongs to the methyltransferase superfamily. PrmA family.

The protein resides in the cytoplasm. The catalysed reaction is L-lysyl-[protein] + 3 S-adenosyl-L-methionine = N(6),N(6),N(6)-trimethyl-L-lysyl-[protein] + 3 S-adenosyl-L-homocysteine + 3 H(+). Its function is as follows. Methylates ribosomal protein L11. The polypeptide is Ribosomal protein L11 methyltransferase (Pseudomonas syringae pv. tomato (strain ATCC BAA-871 / DC3000)).